Here is a 227-residue protein sequence, read N- to C-terminus: Phosphatidylserine decarboxylase proenzyme (227 aa).

Catalysis depends on S169, which acts as the Schiff-base intermediate with substrate; via pyruvic acid. Position 169 is a pyruvic acid (Ser); by autocatalysis (S169). The disordered stretch occupies residues 197 to 227 (GRIPTPESGRSSSAEATAAPSASSARRSSAS). Residues 206-227 (RSSSAEATAAPSASSARRSSAS) show a composition bias toward low complexity.

This sequence belongs to the phosphatidylserine decarboxylase family. PSD-A subfamily. In terms of assembly, heterodimer of a large membrane-associated beta subunit and a small pyruvoyl-containing alpha subunit. Pyruvate is required as a cofactor. In terms of processing, is synthesized initially as an inactive proenzyme. Formation of the active enzyme involves a self-maturation process in which the active site pyruvoyl group is generated from an internal serine residue via an autocatalytic post-translational modification. Two non-identical subunits are generated from the proenzyme in this reaction, and the pyruvate is formed at the N-terminus of the alpha chain, which is derived from the carboxyl end of the proenzyme. The post-translation cleavage follows an unusual pathway, termed non-hydrolytic serinolysis, in which the side chain hydroxyl group of the serine supplies its oxygen atom to form the C-terminus of the beta chain, while the remainder of the serine residue undergoes an oxidative deamination to produce ammonia and the pyruvoyl prosthetic group on the alpha chain.

It is found in the cell membrane. It catalyses the reaction a 1,2-diacyl-sn-glycero-3-phospho-L-serine + H(+) = a 1,2-diacyl-sn-glycero-3-phosphoethanolamine + CO2. The protein operates within phospholipid metabolism; phosphatidylethanolamine biosynthesis; phosphatidylethanolamine from CDP-diacylglycerol: step 2/2. In terms of biological role, catalyzes the formation of phosphatidylethanolamine (PtdEtn) from phosphatidylserine (PtdSer). In Salinibacter ruber (strain DSM 13855 / M31), this protein is Phosphatidylserine decarboxylase proenzyme.